A 545-amino-acid chain; its full sequence is Chaperonin GroEL (545 aa).

ATP is bound by residues 30–33 (TLGP), K51, 87–91 (DGTTT), G415, and D496. The tract at residues 526–545 (PEPKAPAGGMPDMGGMGGMM) is disordered. The span at 536–545 (PDMGGMGGMM) shows a compositional bias: gly residues.

The protein belongs to the chaperonin (HSP60) family. Forms a cylinder of 14 subunits composed of two heptameric rings stacked back-to-back. Interacts with the co-chaperonin GroES.

It localises to the cytoplasm. The enzyme catalyses ATP + H2O + a folded polypeptide = ADP + phosphate + an unfolded polypeptide.. Its function is as follows. Together with its co-chaperonin GroES, plays an essential role in assisting protein folding. The GroEL-GroES system forms a nano-cage that allows encapsulation of the non-native substrate proteins and provides a physical environment optimized to promote and accelerate protein folding. This is Chaperonin GroEL from Paracoccus denitrificans (strain Pd 1222).